Here is a 629-residue protein sequence, read N- to C-terminus: tRNA uridine 5-carboxymethylaminomethyl modification enzyme MnmG (629 aa).

Residue Gly14 to Gly19 participates in FAD binding. Residue Gly274–Phe288 coordinates NAD(+).

Belongs to the MnmG family. Homodimer. Heterotetramer of two MnmE and two MnmG subunits. The cofactor is FAD.

The protein resides in the cytoplasm. NAD-binding protein involved in the addition of a carboxymethylaminomethyl (cmnm) group at the wobble position (U34) of certain tRNAs, forming tRNA-cmnm(5)s(2)U34. This is tRNA uridine 5-carboxymethylaminomethyl modification enzyme MnmG from Xylella fastidiosa (strain 9a5c).